We begin with the raw amino-acid sequence, 391 residues long: 3-ketoacyl-CoA thiolase (391 aa).

Residue C95 is the Acyl-thioester intermediate of the active site. Catalysis depends on proton acceptor residues H347 and C377.

It belongs to the thiolase-like superfamily. Thiolase family. Heterotetramer of two alpha chains (FadB) and two beta chains (FadA).

The protein localises to the cytoplasm. It carries out the reaction an acyl-CoA + acetyl-CoA = a 3-oxoacyl-CoA + CoA. It participates in lipid metabolism; fatty acid beta-oxidation. Catalyzes the final step of fatty acid oxidation in which acetyl-CoA is released and the CoA ester of a fatty acid two carbons shorter is formed. In Pseudomonas entomophila (strain L48), this protein is 3-ketoacyl-CoA thiolase.